The primary structure comprises 99 residues: Integration host factor subunit alpha (99 aa).

The tract at residues 49–75 is disordered; that stretch reads FGNFDLRDKNQRPGRNPKTGEDIPITA.

Belongs to the bacterial histone-like protein family. In terms of assembly, heterodimer of an alpha and a beta chain.

Functionally, this protein is one of the two subunits of integration host factor, a specific DNA-binding protein that functions in genetic recombination as well as in transcriptional and translational control. This Salmonella agona (strain SL483) protein is Integration host factor subunit alpha.